Reading from the N-terminus, the 102-residue chain is Large ribosomal subunit protein bL21 (102 aa).

The protein belongs to the bacterial ribosomal protein bL21 family. In terms of assembly, part of the 50S ribosomal subunit. Contacts protein L20.

Its function is as follows. This protein binds to 23S rRNA in the presence of protein L20. This Citrifermentans bemidjiense (strain ATCC BAA-1014 / DSM 16622 / JCM 12645 / Bem) (Geobacter bemidjiensis) protein is Large ribosomal subunit protein bL21.